Reading from the N-terminus, the 55-residue chain is Large ribosomal subunit protein bL33C (55 aa).

The protein belongs to the bacterial ribosomal protein bL33 family.

The protein is Large ribosomal subunit protein bL33C of Kineococcus radiotolerans (strain ATCC BAA-149 / DSM 14245 / SRS30216).